The following is a 508-amino-acid chain: MEEYQVYLELNRSRHQDFLYPLIFREYIYGLTYGHDLNRSIFIENVGYDNKSSLLIVKRLITRMYQQSQLIISTNDSNKNLFWGYNNNIYSQIISEGFVVVVEIPFSLQFSSSLEGAEIVKFYKNLRSIHSIFPFFEDKLIYFNYESDIRIPYPIHLEILVQILRYWMKDVSFFHLLRFFFFYYCNWNSLITPKKLISTFSKSNPRFFLFLYNLYVWEHESIFLFLRNKSSHLRLESFCVFFERIFFYAKIEHLVQVIAKDFSYTLSFFKDPFIHYVRYQEKSILVSRNTPLLMNKWKYYFIHLWQCHFDVWSQPGTIHINQLSEHSFHFLDYFLNLQLNLSVVRSQMLQNSFLMEIVMKKLDTRVPIILLIRSLVKAKFCNVLGHPLSKSVWADLSDFDIIDRFLRICRNFSHYYNGSSKKKNLYRIKYILRLSCIKTLARKHKSTVRAFLKRLDSEKLLEEFFTEEEDIFSLIFPRTSSTLQRLYRGRIWYLDILFSHDPDLVNHS.

It belongs to the intron maturase 2 family. MatK subfamily.

The protein resides in the plastid. Its subcellular location is the chloroplast. Usually encoded in the trnK tRNA gene intron. Probably assists in splicing its own and other chloroplast group II introns. The protein is Maturase K of Abrus precatorius (Indian licorice).